A 370-amino-acid polypeptide reads, in one-letter code: Histidinol-phosphate aminotransferase (370 aa).

Lys-223 is modified (N6-(pyridoxal phosphate)lysine).

This sequence belongs to the class-II pyridoxal-phosphate-dependent aminotransferase family. Histidinol-phosphate aminotransferase subfamily. Homodimer. The cofactor is pyridoxal 5'-phosphate.

It carries out the reaction L-histidinol phosphate + 2-oxoglutarate = 3-(imidazol-4-yl)-2-oxopropyl phosphate + L-glutamate. It functions in the pathway amino-acid biosynthesis; L-histidine biosynthesis; L-histidine from 5-phospho-alpha-D-ribose 1-diphosphate: step 7/9. The polypeptide is Histidinol-phosphate aminotransferase (Methylobacterium sp. (strain 4-46)).